A 1364-amino-acid polypeptide reads, in one-letter code: Serine protease EatA (1364 aa).

Residues 1 to 56 (MNKVFSLKYSFLAKGFIAVSELARRVSVKGKLKSASSIIISPITIAIVSYAPPSLA) form the signal peptide. Positions 57-307 (ATVNADISYQ…VVTTQDFLHQ (251 aa)) constitute a Peptidase S6 domain. Residues His-134, Asp-162, and Ser-267 each act as charge relay system in the active site. In terms of domain architecture, Autotransporter spans 1098–1364 (DSQGDAGGWA…SINANFRYYF (267 aa)).

Post-translationally, cleaved to release the mature protein from the outer membrane.

It localises to the periplasm. It is found in the secreted. The protein resides in the cell surface. The protein localises to the cell outer membrane. With respect to regulation, inhibited by phenylmethylsulfonyl fluoride. Its function is as follows. Autotransporter serine protease probably involved in virulence. This Escherichia coli O78:H11 (strain H10407 / ETEC) protein is Serine protease EatA (eatA).